The sequence spans 545 residues: CTP synthase (545 aa).

The interval 1 to 265 (MTKYIFITGG…DEIVVKKLSL (265 aa)) is amidoligase domain. Ser-13 serves as a coordination point for CTP. Residue Ser-13 coordinates UTP. ATP is bound by residues 14 to 19 (SLGKGI) and Asp-71. Mg(2+) is bound by residues Asp-71 and Glu-139. CTP contacts are provided by residues 146–148 (DIE), 186–191 (KTKPTQ), and Lys-222. UTP is bound by residues 186–191 (KTKPTQ) and Lys-222. The Glutamine amidotransferase type-1 domain occupies 290-541 (KIAMVGKYTE…VLAARIHHQE (252 aa)). Residue Gly-351 coordinates L-glutamine. Cys-378 acts as the Nucleophile; for glutamine hydrolysis in catalysis. L-glutamine is bound by residues 379–382 (LGMQ), Glu-402, and Arg-469. Residues His-514 and Glu-516 contribute to the active site.

This sequence belongs to the CTP synthase family. Homotetramer.

The enzyme catalyses UTP + L-glutamine + ATP + H2O = CTP + L-glutamate + ADP + phosphate + 2 H(+). It carries out the reaction L-glutamine + H2O = L-glutamate + NH4(+). The catalysed reaction is UTP + NH4(+) + ATP = CTP + ADP + phosphate + 2 H(+). It participates in pyrimidine metabolism; CTP biosynthesis via de novo pathway; CTP from UDP: step 2/2. With respect to regulation, allosterically activated by GTP, when glutamine is the substrate; GTP has no effect on the reaction when ammonia is the substrate. The allosteric effector GTP functions by stabilizing the protein conformation that binds the tetrahedral intermediate(s) formed during glutamine hydrolysis. Inhibited by the product CTP, via allosteric rather than competitive inhibition. In terms of biological role, catalyzes the ATP-dependent amination of UTP to CTP with either L-glutamine or ammonia as the source of nitrogen. Regulates intracellular CTP levels through interactions with the four ribonucleotide triphosphates. The protein is CTP synthase of Legionella pneumophila (strain Corby).